We begin with the raw amino-acid sequence, 126 residues long: 13 kDa ribonucleoprotein-associated protein (126 aa).

The protein belongs to the eukaryotic ribosomal protein eL8 family. In terms of assembly, component of the U3 snoRNP particle. Binds to the C'/D and B/C motifs in U3 snoRNA. Component of the 25S U4/U6.U5 tri-snRNP particle, a subcomplex of the spliceosome. Binds to the 5' stem-loop of U4 snRNA.

The protein localises to the nucleus. The protein resides in the nucleolus. In terms of biological role, common component of the spliceosome and rRNA processing machinery. In association with the spliceosomal U4/U6.U5 tri-snRNP particle, required for splicing of pre-mRNA. In association with box C/D snoRNPs, required for processing of pre-ribosomal RNA (rRNA) and site-specific 2'-O-methylation of substrate RNAs. Essential for the accumulation and stability of U4 snRNA, U6 snRNA, and box C/D snoRNAs. The polypeptide is 13 kDa ribonucleoprotein-associated protein (SNU13) (Debaryomyces hansenii (strain ATCC 36239 / CBS 767 / BCRC 21394 / JCM 1990 / NBRC 0083 / IGC 2968) (Yeast)).